Consider the following 509-residue polypeptide: MKKPIVQLLLIFTIVSIVLFLLNTSYISLYTFVGALWSITIVGISFVIFIENRSPQSTLAWFLVLALLPIIGVLLYAIFGRSRWRRKKHLHRSEEQRKLFREILEGRRLELLLTVPLNERSIHLTEVIQKFGGGPAADRTTTKLLTNGDQTFSEILRAIEQAKHHIHIQYYIYKSDEIGTKVRDALIQKAKDGVIVRFLYDGLGSNTLRRRFLQPMKEAGIEIVEFDPIFSAWLLETVNYRNHRKIVIVDGEIGFTGGLNVGDEYLGRSKKFPVWRDSHLKIEGKALYKLQAIFLEDWLYASSGLNTYSWDQFMNRQYFPGKEISNAEGAVQIVASGPSSDDKSIRNTLLAVMGSAKKSIWIATPYFIPDQETLTLLRLSAIAGIDVRILYPGKSDSIISDQASQSYFTPLLKAGASIYSYKDGFMHAKIVLVDDTIATIGTANMDVRSFELNYEIISVLYESKTVHDIKRDFEEDFKHSTEIKWNSFQKRSIKKRILESFMRLISPLL.

A run of 3 helical transmembrane segments spans residues 4–24, 30–50, and 59–79; these read PIVQ…LLNT, YTFV…VIFI, and LAWF…YAIF. 2 PLD phosphodiesterase domains span residues 238-265 and 422-449; these read VNYR…GDEY and KDGF…DVRS. Active-site residues include His243, Lys245, Asp250, His427, Lys429, and Asp434.

Belongs to the phospholipase D family. Cardiolipin synthase subfamily.

The protein resides in the cell membrane. It carries out the reaction 2 a 1,2-diacyl-sn-glycero-3-phospho-(1'-sn-glycerol) = a cardiolipin + glycerol. Its function is as follows. Catalyzes the reversible phosphatidyl group transfer from one phosphatidylglycerol molecule to another to form cardiolipin (CL) (diphosphatidylglycerol) and glycerol. This chain is Cardiolipin synthase 1 (cls1), found in Bacillus cereus (strain ATCC 14579 / DSM 31 / CCUG 7414 / JCM 2152 / NBRC 15305 / NCIMB 9373 / NCTC 2599 / NRRL B-3711).